Here is a 282-residue protein sequence, read N- to C-terminus: B3 domain-containing protein At5g25475 (282 aa).

Residues 20 to 114 (WKSLSPGQTW…NLEVQIFKNN (95 aa)) constitute a DNA-binding region (TF-B3). The tract at residues 127 to 178 (PETEPFHPTPKKPHKETTPASSFASGSGCSANGGTNGRGKQRSSDVKNPERY) is disordered. Positions 144–159 (TPASSFASGSGCSANG) are enriched in low complexity.

It is found in the nucleus. This Arabidopsis thaliana (Mouse-ear cress) protein is B3 domain-containing protein At5g25475.